The primary structure comprises 206 residues: Large ribosomal subunit protein uL4 (206 aa).

The protein belongs to the universal ribosomal protein uL4 family. As to quaternary structure, part of the 50S ribosomal subunit.

Its function is as follows. One of the primary rRNA binding proteins, this protein initially binds near the 5'-end of the 23S rRNA. It is important during the early stages of 50S assembly. It makes multiple contacts with different domains of the 23S rRNA in the assembled 50S subunit and ribosome. Forms part of the polypeptide exit tunnel. In Bradyrhizobium sp. (strain BTAi1 / ATCC BAA-1182), this protein is Large ribosomal subunit protein uL4.